The sequence spans 301 residues: Homoserine O-acetyltransferase (301 aa).

The active-site Acyl-thioester intermediate is Cys-142. Substrate is bound by residues Lys-163 and Ser-192. His-235 serves as the catalytic Proton acceptor. Glu-237 is a catalytic residue. Position 249 (Arg-249) interacts with substrate.

The protein belongs to the MetA family.

It localises to the cytoplasm. It catalyses the reaction L-homoserine + acetyl-CoA = O-acetyl-L-homoserine + CoA. It participates in amino-acid biosynthesis; L-methionine biosynthesis via de novo pathway; O-acetyl-L-homoserine from L-homoserine: step 1/1. Transfers an acetyl group from acetyl-CoA to L-homoserine, forming acetyl-L-homoserine. The sequence is that of Homoserine O-acetyltransferase from Novosphingobium aromaticivorans (strain ATCC 700278 / DSM 12444 / CCUG 56034 / CIP 105152 / NBRC 16084 / F199).